A 282-amino-acid chain; its full sequence is MSSYANHQALAGLTLGKSTDYRDTYDASLLQGVPRSLNRDPLGLKADNLPFHGTDIWTLYELSWLNAKGLPQVAVGHVELDYTSANLIESKSFKLYLNSFNQTRFNNWDEVRQTLERDLSTCAQGKVSVALYRLDELEGQPIGHFNGTCIDDQDITIDNYEFTTDYLENATSGEKVVEETLVSHLLKSNCLITHQPDWGSIQIQYRGRQIDREKLLRYLVSFRHHNEFHEQCVERIFNDLLRFCQPEKLSVYARYTRRGGLDINPWRSNSDFVPSTTRLVRQ.

88 to 90 (IES) contacts substrate. 90 to 91 (SK) contacts NADPH. C190 acts as the Thioimide intermediate in catalysis. D197 serves as the catalytic Proton donor. 229-230 (HE) is a binding site for substrate. Residue 258-259 (RG) participates in NADPH binding.

The protein belongs to the GTP cyclohydrolase I family. QueF type 2 subfamily. In terms of assembly, homodimer.

The protein localises to the cytoplasm. The catalysed reaction is 7-aminomethyl-7-carbaguanine + 2 NADP(+) = 7-cyano-7-deazaguanine + 2 NADPH + 3 H(+). Its pathway is tRNA modification; tRNA-queuosine biosynthesis. Its function is as follows. Catalyzes the NADPH-dependent reduction of 7-cyano-7-deazaguanine (preQ0) to 7-aminomethyl-7-deazaguanine (preQ1). The chain is NADPH-dependent 7-cyano-7-deazaguanine reductase from Escherichia coli (strain SMS-3-5 / SECEC).